Consider the following 657-residue polypeptide: Glycogen debranching enzyme (657 aa).

Residue Asp-336 is the Nucleophile of the active site. Glu-371 (proton donor) is an active-site residue. The segment at 460–481 is disordered; it reads ANGEENRDGTNNNYSNNHGKEG.

It belongs to the glycosyl hydrolase 13 family.

It carries out the reaction Hydrolysis of (1-&gt;6)-alpha-D-glucosidic linkages to branches with degrees of polymerization of three or four glucose residues in limit dextrin.. It functions in the pathway glycan degradation; glycogen degradation. Removes maltotriose and maltotetraose chains that are attached by 1,6-alpha-linkage to the limit dextrin main chain, generating a debranched limit dextrin. The protein is Glycogen debranching enzyme of Escherichia coli O157:H7.